The primary structure comprises 433 residues: Tol-Pal system protein TolB (433 aa).

The signal sequence occupies residues 1 to 21; the sequence is MRNLLRGMLVVICCMAGIAAA.

It belongs to the TolB family. In terms of assembly, the Tol-Pal system is composed of five core proteins: the inner membrane proteins TolA, TolQ and TolR, the periplasmic protein TolB and the outer membrane protein Pal. They form a network linking the inner and outer membranes and the peptidoglycan layer.

It is found in the periplasm. Part of the Tol-Pal system, which plays a role in outer membrane invagination during cell division and is important for maintaining outer membrane integrity. This Pseudomonas fluorescens (strain SBW25) protein is Tol-Pal system protein TolB.